Reading from the N-terminus, the 394-residue chain is Stearoyl-[acyl-carrier-protein] 9-desaturase 1, chloroplastic (394 aa).

The N-terminal 37 residues, 1 to 37, are a transit peptide targeting the chloroplast; the sequence is MVMAMDRIALFSSSSSVYHHGSSHSHGSKSSRVFTIR. Fe cation contacts are provided by Glu135, Glu173, His176, Glu226, Glu259, and His262.

Belongs to the fatty acid desaturase type 2 family. As to quaternary structure, homodimer. Fe(2+) is required as a cofactor. As to expression, ubiquitously expressed.

Its subcellular location is the plastid. It is found in the chloroplast. The catalysed reaction is octadecanoyl-[ACP] + 2 reduced [2Fe-2S]-[ferredoxin] + O2 + 2 H(+) = (9Z)-octadecenoyl-[ACP] + 2 oxidized [2Fe-2S]-[ferredoxin] + 2 H2O. The protein operates within lipid metabolism; fatty acid metabolism. Functionally, converts stearoyl-ACP to oleoyl-ACP by introduction of a cis double bond between carbons 9 and 10 of the acyl chain. The sequence is that of Stearoyl-[acyl-carrier-protein] 9-desaturase 1, chloroplastic (S-ACP-DES1) from Arabidopsis thaliana (Mouse-ear cress).